The primary structure comprises 466 residues: Asparagine--tRNA ligase (466 aa).

This sequence belongs to the class-II aminoacyl-tRNA synthetase family. In terms of assembly, homodimer.

Its subcellular location is the cytoplasm. It carries out the reaction tRNA(Asn) + L-asparagine + ATP = L-asparaginyl-tRNA(Asn) + AMP + diphosphate + H(+). The chain is Asparagine--tRNA ligase from Vibrio cholerae serotype O1 (strain ATCC 39315 / El Tor Inaba N16961).